The chain runs to 521 residues: MKLLSNSLMFLPLLALALTAVSSLKYSRNDFPPGFVFGSGTSAYQVEGAADEDGRTPSIWDVFAHAGHSGVAAGNVACDQYHKYKEDVKLMADMGLEAYRFSISWSRLLPSGRGPINPKGLQYYNNLIDELITHGIQPHVTLHHFDLPQALEDEYGGWLSQEIVRDFTAYADTCFKEFGDRVSHWTTINEVNVFALGGYDQGITPPARCSPPFGLNCTKGNSSIEPYIAVHNMLLAHASATILYKQQYKVLLSASLPSSICIAFCYVLFITQYKQHGSVGISVYTYGAVPLTNSVKDKQATARVNDFYIGWILHPLVFGDYPETMKTNVGSRLPAFTEEESEQVKGAFDFVGVINYMALYVKDNSSSLKPNLQDFNTDIAVEMTLVGNTSIENEYANTPWSLQQILLYVKETYGNPPVYILENGQMTPHSSSLVDTTRVKYLSSYIKAVLHSLSRKGSDVKGYFQWSLMDVFELFGGYERSFGLLYVDFKDPSLKRSPKLSAHWYSSFLKGTLHHPSYASS.

The N-terminal stretch at 1–23 (MKLLSNSLMFLPLLALALTAVSS) is a signal peptide. Residues Gln-45, His-144, and 189 to 190 (NE) contribute to the a beta-D-glucoside site. Glu-190 acts as the Proton donor in catalysis. Residues Cys-209 and Cys-217 are joined by a disulfide bond. Residues Asn-216 and Asn-221 are each glycosylated (N-linked (GlcNAc...) asparagine). Tyr-356 serves as a coordination point for a beta-D-glucoside. Residues Asn-364 and Asn-388 are each glycosylated (N-linked (GlcNAc...) asparagine). A beta-D-glucoside is bound by residues Glu-422, Trp-466, and Phe-482. Glu-422 functions as the Nucleophile in the catalytic mechanism.

This sequence belongs to the glycosyl hydrolase 1 family.

It carries out the reaction Hydrolysis of terminal, non-reducing beta-D-glucosyl residues with release of beta-D-glucose.. This chain is Beta-glucosidase 11, found in Arabidopsis thaliana (Mouse-ear cress).